A 325-amino-acid polypeptide reads, in one-letter code: Release factor glutamine methyltransferase (325 aa).

S-adenosyl-L-methionine contacts are provided by residues 141-145 (GTGSG), aspartate 164, tryptophan 193, and asparagine 207. Residue 207-210 (NPPY) participates in substrate binding. Positions 306–325 (LPPIHIDAKPSAPGNGPTKA) are disordered.

Belongs to the protein N5-glutamine methyltransferase family. PrmC subfamily.

It carries out the reaction L-glutaminyl-[peptide chain release factor] + S-adenosyl-L-methionine = N(5)-methyl-L-glutaminyl-[peptide chain release factor] + S-adenosyl-L-homocysteine + H(+). In terms of biological role, methylates the class 1 translation termination release factors RF1/PrfA and RF2/PrfB on the glutamine residue of the universally conserved GGQ motif. This chain is Release factor glutamine methyltransferase, found in Rhodospirillum rubrum (strain ATCC 11170 / ATH 1.1.1 / DSM 467 / LMG 4362 / NCIMB 8255 / S1).